A 383-amino-acid polypeptide reads, in one-letter code: Chorismate synthase (383 aa).

Arg48 is an NADP(+) binding site. FMN is bound by residues 125–127 (RSS), Gly286, 301–305 (HAPTS), and Arg328. Residues 361–383 (PDRLDDNPGQYETEYHPSSPQTN) form a disordered region.

It belongs to the chorismate synthase family. Requires FMNH2 as cofactor.

The enzyme catalyses 5-O-(1-carboxyvinyl)-3-phosphoshikimate = chorismate + phosphate. It functions in the pathway metabolic intermediate biosynthesis; chorismate biosynthesis; chorismate from D-erythrose 4-phosphate and phosphoenolpyruvate: step 7/7. Its function is as follows. Catalyzes the anti-1,4-elimination of the C-3 phosphate and the C-6 proR hydrogen from 5-enolpyruvylshikimate-3-phosphate (EPSP) to yield chorismate, which is the branch point compound that serves as the starting substrate for the three terminal pathways of aromatic amino acid biosynthesis. This reaction introduces a second double bond into the aromatic ring system. This Haloquadratum walsbyi (strain DSM 16790 / HBSQ001) protein is Chorismate synthase.